A 1010-amino-acid polypeptide reads, in one-letter code: Plasma membrane ATPase 2 (1010 aa).

Residues 1-14 (MQRNNGEGRPEGMH) show a composition bias toward basic and acidic residues. Disordered regions lie at residues 1-126 (MQRN…EDED) and 139-165 (QDQE…PEEL). Over 1 to 201 (MQRNNGEGRP…KEEKTNNIKK (201 aa)) the chain is Cytoplasmic. Residues 25–34 (FKNNASPQDD) show a composition bias toward polar residues. A compositionally biased stretch (acidic residues) spans 42–52 (YEEGGVEDSAV). A compositionally biased stretch (polar residues) spans 68 to 106 (APNTHAQQANLQSGNTSITHETQSTSRGQEATTSPSLSA). The span at 140–151 (DQEEEQVEEEES) shows a compositional bias: acidic residues. The chain crosses the membrane as a helical span at residues 202 to 222 (FLSFFVGPIQFVMELAAALAA). Residues 223 to 226 (GLRD) lie on the Extracellular side of the membrane. The helical transmembrane segment at 227–246 (WVDFGVICALLLLNATVGFV) threads the bilayer. The Cytoplasmic segment spans residues 247–377 (QEYQAGSIVD…SQGHFTEVLN (131 aa)). A helical transmembrane segment spans residues 378-399 (GIGTILLVLVILTLLCIYTAAF). Topologically, residues 400 to 410 (YRSVRLAALLE) are extracellular. Residues 411-433 (YTLAITIIGVPVGLPAVVTTTMA) form a helical membrane-spanning segment. At 434–805 (VGAAYLAKKK…LIIRNQLLNL (372 aa)) the chain is on the cytoplasmic side. The 4-aspartylphosphate intermediate role is filled by Asp464. Residues Asp720 and Asp724 each contribute to the Mg(2+) site. Residues 806–824 (ELIVFIAIFADVATLAIAY) form a helical membrane-spanning segment. Residues 825–840 (DNAPYAMKPVKWNLPR) are Extracellular-facing. A helical transmembrane segment spans residues 841–860 (LWGLATIVGILLAIGTWIVN). Residues 861-912 (TTMIAQGQNRGIVQNFGVQDEVLFLQISLTENWLIFITRCSGPFWSSFPSWQ) lie on the Cytoplasmic side of the membrane. Residues 913–933 (LSGAVLVVDILATLFCIFGWF) traverse the membrane as a helical segment. Residues 934 to 946 (KGGHQTSIVAVIR) lie on the Extracellular side of the membrane. Residues 947–963 (IWMYSFGIFCLIAGVYY) form a helical membrane-spanning segment. The Cytoplasmic segment spans residues 964-1010 (ILSESSSFDRWMHGKHKERGTTRKLEDFVMQLQRTSTHHEAEGKVTS).

It belongs to the cation transport ATPase (P-type) (TC 3.A.3) family. Type IIIA subfamily. In terms of processing, in addition to transient phosphorylation of the active site Asp residue, this protein, but not the product of the pma1 locus, is phosphorylated efficiently in isolated plasma membrane.

The protein resides in the cell membrane. The catalysed reaction is ATP + H2O + H(+)(in) = ADP + phosphate + 2 H(+)(out). In terms of biological role, the plasma membrane ATPase of plants and fungi is a hydrogen ion pump. The proton gradient it generates drives the active transport of nutrients by H(+)-symport. The resulting external acidification and/or internal alkinization may mediate growth responses. In Schizosaccharomyces pombe (strain 972 / ATCC 24843) (Fission yeast), this protein is Plasma membrane ATPase 2 (pma2).